Consider the following 186-residue polypeptide: Elongation factor P (186 aa).

The protein belongs to the elongation factor P family.

Its subcellular location is the cytoplasm. It participates in protein biosynthesis; polypeptide chain elongation. In terms of biological role, involved in peptide bond synthesis. Stimulates efficient translation and peptide-bond synthesis on native or reconstituted 70S ribosomes in vitro. Probably functions indirectly by altering the affinity of the ribosome for aminoacyl-tRNA, thus increasing their reactivity as acceptors for peptidyl transferase. In Acidobacterium capsulatum (strain ATCC 51196 / DSM 11244 / BCRC 80197 / JCM 7670 / NBRC 15755 / NCIMB 13165 / 161), this protein is Elongation factor P.